The sequence spans 46 residues: Protein PsbN (46 aa).

A helical transmembrane segment spans residues Val-10–Phe-30.

This sequence belongs to the PsbN family.

It is found in the cellular thylakoid membrane. Functionally, may play a role in photosystem I and II biogenesis. In Synechococcus sp. (strain WH7803), this protein is Protein PsbN.